The chain runs to 194 residues: Protein GrpE (194 aa).

The tract at residues 1-39 (MTNHEQDQQDNSELLDDDQVTLESQQAADSGAEAPASDD) is disordered. Acidic residues predominate over residues 8–20 (QQDNSELLDDDQV).

This sequence belongs to the GrpE family. Homodimer.

The protein localises to the cytoplasm. Its function is as follows. Participates actively in the response to hyperosmotic and heat shock by preventing the aggregation of stress-denatured proteins, in association with DnaK and GrpE. It is the nucleotide exchange factor for DnaK and may function as a thermosensor. Unfolded proteins bind initially to DnaJ; upon interaction with the DnaJ-bound protein, DnaK hydrolyzes its bound ATP, resulting in the formation of a stable complex. GrpE releases ADP from DnaK; ATP binding to DnaK triggers the release of the substrate protein, thus completing the reaction cycle. Several rounds of ATP-dependent interactions between DnaJ, DnaK and GrpE are required for fully efficient folding. The polypeptide is Protein GrpE (Saccharophagus degradans (strain 2-40 / ATCC 43961 / DSM 17024)).